Consider the following 210-residue polypeptide: Ribosomal RNA small subunit methyltransferase G (210 aa).

Residues glycine 76, methionine 81, valine 127–glutamate 128, and arginine 145 each bind S-adenosyl-L-methionine.

The protein belongs to the methyltransferase superfamily. RNA methyltransferase RsmG family.

It is found in the cytoplasm. The catalysed reaction is guanosine(527) in 16S rRNA + S-adenosyl-L-methionine = N(7)-methylguanosine(527) in 16S rRNA + S-adenosyl-L-homocysteine. Specifically methylates the N7 position of guanine in position 527 of 16S rRNA. The sequence is that of Ribosomal RNA small subunit methyltransferase G from Acinetobacter baumannii (strain SDF).